The following is a 1003-amino-acid chain: Phosphatidylinositol 4,5-bisphosphate 5-phosphatase A (1003 aa).

2 disordered regions span residues 1–110 (MEGQ…AAKS) and 147–414 (AMPR…QPTC). The RSXSXX motif 1 signature appears at 6–11 (RSGSAR). The span at 11–24 (RPGTRTGLGPLPGT) shows a compositional bias: low complexity. Arginine 56 bears the Asymmetric dimethylarginine; alternate mark. At arginine 56 the chain carries Omega-N-methylarginine; alternate. Arginine 65 bears the Omega-N-methylarginine mark. At arginine 76 the chain carries Asymmetric dimethylarginine. Position 83 is an asymmetric dimethylarginine; alternate (arginine 83). Arginine 83 carries the post-translational modification Omega-N-methylarginine; alternate. Residues 160–174 (LTPTSRDQKQLSPTS) are compositionally biased toward polar residues. Serine 171 is modified (phosphoserine). Residues 180 to 196 (ALATSGLSLALASQEQP) show a composition bias toward low complexity. Residues 197 to 210 (PQSPSSPSPVPSPV) are compositionally biased toward pro residues. Basic and acidic residues predominate over residues 284–294 (ARPEAPRHSPE). 2 positions are modified to phosphoserine: serine 292 and serine 325. The segment covering 338–348 (VPPPLPKPPRS) has biased composition (pro residues). The SH3-binding signature appears at 346–351 (PRSPSR). Composition is skewed to low complexity over residues 349–361 (PSRS…NRSP) and 390–413 (QAQE…AQPT). An RSXSXX motif 2 motif is present at residues 351–356 (RSPSRS). The interval 422 to 725 (ITVVTWNVGT…SDHKPVAAQF (304 aa)) is catalytic. The interval 726 to 837 (ILQFAFRDDV…IGVTEPFQIS (112 aa)) is required for ruffle localization. A disordered region spans residues 839–1003 (PTSESASSST…LGLEEGGLGP (165 aa)). Low complexity predominate over residues 840–855 (TSESASSSTDSSGTSS). Short sequence motifs (RSXSXX motif) lie at residues 871–876 (RSPSPG) and 882–887 (RSRSPG). A Phosphoserine modification is found at serine 900. Composition is skewed to low complexity over residues 907-919 (SRSP…QLPR) and 927-943 (SSSS…GLPG). The RSXSXX motif 5 signature appears at 908–913 (RSPSPQ). Serine 987 is subject to Phosphoserine.

This sequence belongs to the inositol 1,4,5-trisphosphate 5-phosphatase type II family.

Its subcellular location is the cytoplasm. It catalyses the reaction 1D-myo-inositol 1,4,5-trisphosphate + H2O = 1D-myo-inositol 1,4-bisphosphate + phosphate. The catalysed reaction is 1D-myo-inositol 1,3,4,5-tetrakisphosphate + H2O = 1D-myo-inositol 1,3,4-trisphosphate + phosphate. The enzyme catalyses a 1,2-diacyl-sn-glycero-3-phospho-(1D-myo-inositol-4,5-bisphosphate) + H2O = a 1,2-diacyl-sn-glycero-3-phospho-(1D-myo-inositol 4-phosphate) + phosphate. Its function is as follows. Inositol 5-phosphatase, which converts inositol 1,4,5-trisphosphate to inositol 1,4-bisphosphate. Also converts phosphatidylinositol 4,5-bisphosphate to phosphatidylinositol 4-phosphate and inositol 1,3,4,5-tetrakisphosphate to inositol 1,3,4-trisphosphate in vitro. May be involved in modulation of the function of inositol and phosphatidylinositol polyphosphate-binding proteins that are present at membranes ruffles. The chain is Phosphatidylinositol 4,5-bisphosphate 5-phosphatase A (Inpp5j) from Mus musculus (Mouse).